The primary structure comprises 532 residues: Phosphoenolpyruvate carboxykinase (ATP) (532 aa).

The substrate site is built by R60, Y194, and K200. ATP contacts are provided by residues K200, H219, and 237 to 245 (GLSGTGKTT). K200 and H219 together coordinate Mn(2+). Residue D258 participates in Mn(2+) binding. 3 residues coordinate ATP: E286, R324, and T449. R324 is a binding site for substrate.

The protein belongs to the phosphoenolpyruvate carboxykinase (ATP) family. Mn(2+) is required as a cofactor.

It is found in the cytoplasm. The enzyme catalyses oxaloacetate + ATP = phosphoenolpyruvate + ADP + CO2. Its pathway is carbohydrate biosynthesis; gluconeogenesis. Functionally, involved in the gluconeogenesis. Catalyzes the conversion of oxaloacetate (OAA) to phosphoenolpyruvate (PEP) through direct phosphoryl transfer between the nucleoside triphosphate and OAA. The chain is Phosphoenolpyruvate carboxykinase (ATP) from Ruegeria sp. (strain TM1040) (Silicibacter sp.).